Reading from the N-terminus, the 181-residue chain is Ribonuclease HII (181 aa).

In terms of domain architecture, RNase H type-2 spans 1–181 (MICGIDEVGR…NLHRRSFKFI (181 aa)). A divalent metal cation is bound by residues aspartate 6, glutamate 7, and aspartate 98.

It belongs to the RNase HII family. Mn(2+) serves as cofactor. The cofactor is Mg(2+).

It localises to the cytoplasm. The enzyme catalyses Endonucleolytic cleavage to 5'-phosphomonoester.. Its function is as follows. Endonuclease that specifically degrades the RNA of RNA-DNA hybrids. In Borrelia hermsii (strain HS1 / DAH), this protein is Ribonuclease HII.